The following is a 189-amino-acid chain: Phosphoheptose isomerase (189 aa).

An SIS domain is found at 34 to 189; it reads AVETLKNGNK…CQIIDNELSH (156 aa). Residue 49 to 51 participates in substrate binding; sequence NGG. 2 residues coordinate Zn(2+): His-58 and Glu-62. Residues Glu-62, 91–92, 117–119, Ser-122, and Gln-169 each bind substrate; these read ND and STS. Residues Gln-169 and His-177 each contribute to the Zn(2+) site.

It belongs to the SIS family. GmhA subfamily. As to quaternary structure, homotetramer. The cofactor is Zn(2+).

It is found in the cytoplasm. It carries out the reaction 2 D-sedoheptulose 7-phosphate = D-glycero-alpha-D-manno-heptose 7-phosphate + D-glycero-beta-D-manno-heptose 7-phosphate. Its pathway is carbohydrate biosynthesis; D-glycero-D-manno-heptose 7-phosphate biosynthesis; D-glycero-alpha-D-manno-heptose 7-phosphate and D-glycero-beta-D-manno-heptose 7-phosphate from sedoheptulose 7-phosphate: step 1/1. In terms of biological role, catalyzes the isomerization of sedoheptulose 7-phosphate in D-glycero-D-manno-heptose 7-phosphate. This is Phosphoheptose isomerase from Aliarcobacter butzleri (strain RM4018) (Arcobacter butzleri).